Consider the following 159-residue polypeptide: 2-C-methyl-D-erythritol 2,4-cyclodiphosphate synthase (159 aa).

Aspartate 8 and histidine 10 together coordinate a divalent metal cation. 4-CDP-2-C-methyl-D-erythritol 2-phosphate is bound by residues 8–10 (DVH) and 34–35 (HS). Histidine 42 serves as a coordination point for a divalent metal cation. Residues 56 to 58 (DIG), 132 to 135 (TTTE), and arginine 142 contribute to the 4-CDP-2-C-methyl-D-erythritol 2-phosphate site.

Belongs to the IspF family. As to quaternary structure, homotrimer. The cofactor is a divalent metal cation.

The enzyme catalyses 4-CDP-2-C-methyl-D-erythritol 2-phosphate = 2-C-methyl-D-erythritol 2,4-cyclic diphosphate + CMP. It participates in isoprenoid biosynthesis; isopentenyl diphosphate biosynthesis via DXP pathway; isopentenyl diphosphate from 1-deoxy-D-xylulose 5-phosphate: step 4/6. Functionally, involved in the biosynthesis of isopentenyl diphosphate (IPP) and dimethylallyl diphosphate (DMAPP), two major building blocks of isoprenoid compounds. Catalyzes the conversion of 4-diphosphocytidyl-2-C-methyl-D-erythritol 2-phosphate (CDP-ME2P) to 2-C-methyl-D-erythritol 2,4-cyclodiphosphate (ME-CPP) with a corresponding release of cytidine 5-monophosphate (CMP). In Chlorobium phaeobacteroides (strain BS1), this protein is 2-C-methyl-D-erythritol 2,4-cyclodiphosphate synthase.